A 200-amino-acid polypeptide reads, in one-letter code: NAD(P)H-quinone oxidoreductase subunit 6, chloroplastic (200 aa).

A run of 5 helical transmembrane segments spans residues Ile13–Ser33, Ile35–Ala55, Ala64–Ile84, Ile102–Ser122, and Leu156–Ile176.

It belongs to the complex I subunit 6 family. NDH is composed of at least 16 different subunits, 5 of which are encoded in the nucleus.

The protein resides in the plastid. It localises to the chloroplast thylakoid membrane. The enzyme catalyses a plastoquinone + NADH + (n+1) H(+)(in) = a plastoquinol + NAD(+) + n H(+)(out). It carries out the reaction a plastoquinone + NADPH + (n+1) H(+)(in) = a plastoquinol + NADP(+) + n H(+)(out). Its function is as follows. NDH shuttles electrons from NAD(P)H:plastoquinone, via FMN and iron-sulfur (Fe-S) centers, to quinones in the photosynthetic chain and possibly in a chloroplast respiratory chain. The immediate electron acceptor for the enzyme in this species is believed to be plastoquinone. Couples the redox reaction to proton translocation, and thus conserves the redox energy in a proton gradient. The protein is NAD(P)H-quinone oxidoreductase subunit 6, chloroplastic (ndhG) of Physcomitrium patens (Spreading-leaved earth moss).